Reading from the N-terminus, the 207-residue chain is Methylated-DNA--protein-cysteine methyltransferase (207 aa).

Residues Tyr123 and Arg137 each contribute to the DNA site. The active-site Nucleophile; methyl group acceptor is the Cys154. Position 160 (Ser160) interacts with DNA.

This sequence belongs to the MGMT family.

The protein localises to the nucleus. It carries out the reaction a 6-O-methyl-2'-deoxyguanosine in DNA + L-cysteinyl-[protein] = S-methyl-L-cysteinyl-[protein] + a 2'-deoxyguanosine in DNA. The catalysed reaction is a 4-O-methyl-thymidine in DNA + L-cysteinyl-[protein] = a thymidine in DNA + S-methyl-L-cysteinyl-[protein]. In terms of biological role, involved in the cellular defense against the biological effects of O6-methylguanine (O6-MeG) and O4-methylthymine (O4-MeT) in DNA. Repairs the methylated nucleobase in DNA by stoichiometrically transferring the methyl group to a cysteine residue in the enzyme. This is a suicide reaction: the enzyme is irreversibly inactivated. This chain is Methylated-DNA--protein-cysteine methyltransferase (MGT1), found in Candida glabrata (strain ATCC 2001 / BCRC 20586 / JCM 3761 / NBRC 0622 / NRRL Y-65 / CBS 138) (Yeast).